The following is a 46-amino-acid chain: DNA-directed RNA polymerases I, II, and III subunit rpabc4 (46 aa).

Zn(2+) is bound by residues cysteine 7, cysteine 10, cysteine 24, and cysteine 27. A C4-type zinc finger spans residues cysteine 7–cysteine 27.

It belongs to the archaeal Rpo12/eukaryotic RPC10 RNA polymerase subunit family. Component of the RNA polymerase I (Pol I), RNA polymerase II (Pol II) and RNA polymerase III (Pol III) complexes consisting of at least 13, 12 and 17 subunits, respectively.

The protein resides in the nucleus. Functionally, DNA-dependent RNA polymerase catalyzes the transcription of DNA into RNA using the four ribonucleoside triphosphates as substrates. Common component of RNA polymerases I, II and III which synthesize ribosomal RNA precursors, mRNA precursors and many functional non-coding RNAs, and a small RNAs, such as 5S rRNA and tRNAs, respectively. In Dictyostelium discoideum (Social amoeba), this protein is DNA-directed RNA polymerases I, II, and III subunit rpabc4 (polr2k).